The primary structure comprises 442 residues: MRKAMNKLPKIDKIPNLKEFQNYFKPALLDISKSVLEEIRSKNQNETISEQDVINLIKNAYAKFQNIEPKPLINATGVIIHTNLGRSPISEDLIKQATHLMTSYSNLEYGLSSGKRGDRYAYTSYLLKLLFGCEDALIVNNNAAAVFLILNSFADEKEVLVSRGELVEIGGSFRVPEVMKNSGAILKEIGTTNKTHLSDYENSINENTAMILKVHKSNYDIVGFSSEVSINDIAKLTQKRGILNYYDLGSGYVNTLPYSLSKDEPNVKKLIQSGVDIISFSGDKLFGSVQCGIILGKKELINKLKNNQILRMLRVDKMVLSMLNETIKAYLNKDFHLIKPINQIYKTLSELEVQAKKVLENIKLEASIKETKTFVGGGTMPNKSYPSIGLFFKGNANKNEFKFRKYGIIGRIENAEFLLDFRSIFENDIENIIKIINGMSDE.

K284 is subject to N6-(pyridoxal phosphate)lysine.

This sequence belongs to the SelA family. It depends on pyridoxal 5'-phosphate as a cofactor.

It is found in the cytoplasm. It catalyses the reaction L-seryl-tRNA(Sec) + selenophosphate + H(+) = L-selenocysteinyl-tRNA(Sec) + phosphate. Its pathway is aminoacyl-tRNA biosynthesis; selenocysteinyl-tRNA(Sec) biosynthesis; selenocysteinyl-tRNA(Sec) from L-seryl-tRNA(Sec) (bacterial route): step 1/1. Converts seryl-tRNA(Sec) to selenocysteinyl-tRNA(Sec) required for selenoprotein biosynthesis. The sequence is that of L-seryl-tRNA(Sec) selenium transferase from Campylobacter fetus subsp. fetus (strain 82-40).